Consider the following 143-residue polypeptide: Trypsin inhibitor CMc (143 aa).

Residues 1-24 form the signal peptide; it reads MASCSQHLLSAVAIFSVLAGVATA.

It belongs to the protease inhibitor I6 (cereal trypsin/alpha-amylase inhibitor) family. As to expression, endosperm.

Its subcellular location is the secreted. Trypsin inhibitor. No alpha-amylase inhibition detected. The protein is Trypsin inhibitor CMc (ITR2) of Hordeum vulgare (Barley).